The following is a 156-amino-acid chain: MAFRMKLVVCIVLLSTLAVMSSADVYKGGGGGRYGGGRYGGGGGYGGGLGGGGLGGGGLGGGKGLGGGGLGGGGLGGGGLGGGGLGGGKGLGGGGLGGGGLGGGGLGGGGLGGGKGLGGGGLGGGGLGGGRGGGYGGGGGYGGGYGGGYGGGKYKG.

Residues 1 to 23 (MAFRMKLVVCIVLLSTLAVMSSA) form the signal peptide. K155 bears the Lysine amide mark.

As to expression, expressed in hemocytes and secreted into the plasma following bacterial immune challenge.

It localises to the secreted. Antimicrobial protein. Strong activity against the Gram-negative bacterium E.coli SBS363 and yeast C.albicans. No detectable activity against the Gram-positive bacterium M.luteus. This chain is Acanthoscurrin-1, found in Acanthoscurria gomesiana (Tarantula spider).